Reading from the N-terminus, the 1333-residue chain is Elongator complex protein 1 (1333 aa).

Phosphoserine occurs at positions 805, 1172, and 1175. A mediates dimerization region spans residues 886–1333 (VDVNELFNHS…RSQWKLSLLE (448 aa)). The interval 1175–1209 (SGSEMSGRYSHSNSRISARSSKNRRKAERKKHSLK) is disordered. Residues 1192–1210 (ARSSKNRRKAERKKHSLKE) are required for binding to tRNA. The segment covering 1195 to 1207 (SKNRRKAERKKHS) has biased composition (basic residues).

Belongs to the ELP1/IKA1 family. Homodimer; dimerization promotes ELP1 stability and elongator complex formation. Component of the elongator complex which consists of ELP1, ELP2, ELP3, ELP4, ELP5 and ELP6. Interacts preferentially with MAP3K14/NIK followed by IKK-alpha and IKK-beta. Post-translationally, phosphorylated. In the testis, expression is restricted to germ cells during spermatogenesis with no expression detected in somatic cells such as Sertoli cells or Leydig cells (at protein level). In the ovary, expressed in oocytes of primary, secondary and antral follicles (at protein level). Widely expressed in adult tissues with highest levels in brain and also expressed at all embryonic stages.

The protein resides in the cytoplasm. Its subcellular location is the nucleus. Its pathway is tRNA modification; 5-methoxycarbonylmethyl-2-thiouridine-tRNA biosynthesis. Its function is as follows. Component of the elongator complex which is required for multiple tRNA modifications, including mcm5U (5-methoxycarbonylmethyl uridine), mcm5s2U (5-methoxycarbonylmethyl-2-thiouridine), and ncm5U (5-carbamoylmethyl uridine). The elongator complex catalyzes the formation of carboxymethyluridine in the wobble base at position 34 in tRNAs. Regulates the migration and branching of projection neurons in the developing cerebral cortex, through a process depending on alpha-tubulin acetylation. ELP1 binds to tRNA, mediating interaction of the elongator complex with tRNA. May act as a scaffold protein that assembles active IKK-MAP3K14 complexes (IKKA, IKKB and MAP3K14/NIK). This Mus musculus (Mouse) protein is Elongator complex protein 1 (Elp1).